The chain runs to 763 residues: C6 finger domain transcription factor hasF (763 aa).

Low complexity predominate over residues 1-20 (MDSTTSSSRFSVSSPQSGPS). The interval 1–25 (MDSTTSSSRFSVSSPQSGPSAGIQK) is disordered. The segment at residues 34-61 (CLTCRRRKVKCDHAQPVCTPCQRGGRVC) is a DNA-binding region (zn(2)-C6 fungal-type). Disordered stretches follow at residues 68-91 (PVSQ…RSGQ), 112-145 (GGNM…PKCE), and 189-219 (DQSS…ESLT). Residues 80 to 89 (SRVSRTNLRS) are compositionally biased toward polar residues. Positions 197–209 (DSPPSDQPTPPFP) are enriched in pro residues.

The protein localises to the nucleus. In terms of biological role, transcription factor; part of the gene cluster that mediates the biosynthesis of hexadehydro-astechrome (HAS), a tryptophan-derived iron(III)-complex that acts as a virulence factor in infected mice. Does not regulate the expression of the HAS biosynthetic genes (at least under the growth conditions tested). The sequence is that of C6 finger domain transcription factor hasF from Aspergillus fumigatus (strain CBS 144.89 / FGSC A1163 / CEA10) (Neosartorya fumigata).